The chain runs to 1120 residues: DNA-directed RNA polymerase subunit beta (1120 aa).

It belongs to the RNA polymerase beta chain family. In terms of assembly, in plastids the minimal PEP RNA polymerase catalytic core is composed of four subunits: alpha, beta, beta', and beta''. When a (nuclear-encoded) sigma factor is associated with the core the holoenzyme is formed, which can initiate transcription.

Its subcellular location is the plastid. The protein resides in the chloroplast. The catalysed reaction is RNA(n) + a ribonucleoside 5'-triphosphate = RNA(n+1) + diphosphate. DNA-dependent RNA polymerase catalyzes the transcription of DNA into RNA using the four ribonucleoside triphosphates as substrates. This chain is DNA-directed RNA polymerase subunit beta, found in Gracilaria tenuistipitata var. liui (Red alga).